Reading from the N-terminus, the 207-residue chain is ATP-dependent Clp protease proteolytic subunit (207 aa).

Ser-111 serves as the catalytic Nucleophile. Residue His-136 is part of the active site.

The protein belongs to the peptidase S14 family. Fourteen ClpP subunits assemble into 2 heptameric rings which stack back to back to give a disk-like structure with a central cavity, resembling the structure of eukaryotic proteasomes.

It localises to the cytoplasm. It carries out the reaction Hydrolysis of proteins to small peptides in the presence of ATP and magnesium. alpha-casein is the usual test substrate. In the absence of ATP, only oligopeptides shorter than five residues are hydrolyzed (such as succinyl-Leu-Tyr-|-NHMec, and Leu-Tyr-Leu-|-Tyr-Trp, in which cleavage of the -Tyr-|-Leu- and -Tyr-|-Trp bonds also occurs).. In terms of biological role, cleaves peptides in various proteins in a process that requires ATP hydrolysis. Has a chymotrypsin-like activity. Plays a major role in the degradation of misfolded proteins. This Yersinia enterocolitica serotype O:8 / biotype 1B (strain NCTC 13174 / 8081) protein is ATP-dependent Clp protease proteolytic subunit.